The following is a 1023-amino-acid chain: MPKSYTPVHDSIPEEDHFSSDDESNFRLHRIDRSASRSQSPKENEGEPSILAPLVRKSTDFETYLDSLTEDEQQLLSASKDHDIEDLDRFGDGTAAARRRFSESKKRRKLLAKRGGWRAVYYSKTWWRTLVVVIIALGLLVWGFLKYASTRGDIWEEYDMPGPDSYFPTPKGGTLKHWAESYEKASKLVERMTLIEKVNITTGTGWQMGINSKLTISGPAALVGFPSLCLQDGPLGIRFADHITAFPAGITTGATWNRDLMRQRGAAIGLEARLKGVNVILGPSMGPLGMMPAGGRNWEGFGSDPVLQAVAAVETIHGIQSNGVMATAKHYIMNEQEHFRQPNEWGIPYALSSNIDDRALHEVFLWPFAESIRADVASVMCSYNQVNNSHACENSKLLNGILKDELGFQGFVQSDWLAQRSGVNSALGGLDMSMPGDGLHWADGRSLWGSELTRAALNTSVPMERLNDMVTRIVAAWYQLGQDSWESPAPDGDGGPNFSSWTDDEFGFRYPGSPGDTSAARVNRFIDAQGRGEEGHWNIARKVAAEGIVLVKNVGGVLPLSRSPRANAERPYRVGVYGDDGGPAAGPNICTDRGCNSGTLAMGWGSGTVEFPYLISPIDALQGAWQSDVQMTPYLRNAVMPADTSDKDLCLVFVNADSGEGYISAGGIHGDRNNLFLQKGGDTLVHTVATNCGGPTVVVVHAVGPVIVEPWIDLPGVQAVLFAHLPGEESGNALLDVLFGDVDASGRLPYTVGKSLEDYGPGAQVLYEPNAPVPQVDFSDALYIDHRYFDRNNINPRYEFGFGLSYTKWELTNMKITRLQRNPSRLPAARPPDAVAPPSYDANPPLANESVLFPPGFRILSKYIYPYLPTLEATTPPPPNPEASGSATDQKPHRTKPSDAGGGAGGNPSLYEEVARIDLTVQNTGTRSGQQVIQLYVSFPHTVTESSGQKSHENIDFPDRVLRNFTKISLAPGQKMDVNMTLTRKDLSYWSVREQNWVLPKDEFYFWVGYSSRNLPLGKPFDP.

The interval 1–51 (MPKSYTPVHDSIPEEDHFSSDDESNFRLHRIDRSASRSQSPKENEGEPSIL) is disordered. Residues 1–128 (MPKSYTPVHD…AVYYSKTWWR (128 aa)) lie on the Cytoplasmic side of the membrane. Residues 11 to 45 (SIPEEDHFSSDDESNFRLHRIDRSASRSQSPKENE) are compositionally biased toward basic and acidic residues. The helical; Signal-anchor for type II membrane protein transmembrane segment at 129–149 (TLVVVIIALGLLVWGFLKYAS) threads the bilayer. At 150–1023 (TRGDIWEEYD…NLPLGKPFDP (874 aa)) the chain is on the extracellular side. Asparagine 199 and asparagine 387 each carry an N-linked (GlcNAc...) asparagine glycan. The active site involves aspartate 415. N-linked (GlcNAc...) asparagine glycosylation is found at asparagine 458 and asparagine 497. Disordered regions lie at residues 485 to 515 (WESPAPDGDGGPNFSSWTDDEFGFRYPGSPG) and 822 to 841 (NPSRLPAARPPDAVAPPSYD). A compositionally biased stretch (low complexity) spans 827–838 (PAARPPDAVAPP). N-linked (GlcNAc...) asparagine glycosylation is present at asparagine 848. The segment at 873–909 (ATTPPPPNPEASGSATDQKPHRTKPSDAGGGAGGNPS) is disordered. Residues asparagine 964 and asparagine 979 are each glycosylated (N-linked (GlcNAc...) asparagine).

The protein belongs to the glycosyl hydrolase 3 family.

Its subcellular location is the cell membrane. It carries out the reaction Hydrolysis of terminal, non-reducing beta-D-glucosyl residues with release of beta-D-glucose.. Its pathway is glycan metabolism; cellulose degradation. Its function is as follows. Beta-glucosidases are one of a number of cellulolytic enzymes involved in the degradation of cellulosic biomass. Catalyzes the last step releasing glucose from the inhibitory cellobiose. The sequence is that of Probable beta-glucosidase E (bglE) from Emericella nidulans (strain FGSC A4 / ATCC 38163 / CBS 112.46 / NRRL 194 / M139) (Aspergillus nidulans).